A 378-amino-acid chain; its full sequence is Erythronate-4-phosphate dehydrogenase (378 aa).

Positions 45 and 66 each coordinate substrate. Asp-146 and Thr-175 together coordinate NAD(+). The active site involves Arg-208. Asp-232 contacts NAD(+). Residue Glu-237 is part of the active site. Residue His-254 is the Proton donor of the active site. Gly-257 contacts NAD(+). Tyr-258 lines the substrate pocket.

It belongs to the D-isomer specific 2-hydroxyacid dehydrogenase family. PdxB subfamily. As to quaternary structure, homodimer.

It localises to the cytoplasm. It carries out the reaction 4-phospho-D-erythronate + NAD(+) = (R)-3-hydroxy-2-oxo-4-phosphooxybutanoate + NADH + H(+). It participates in cofactor biosynthesis; pyridoxine 5'-phosphate biosynthesis; pyridoxine 5'-phosphate from D-erythrose 4-phosphate: step 2/5. Its function is as follows. Catalyzes the oxidation of erythronate-4-phosphate to 3-hydroxy-2-oxo-4-phosphonooxybutanoate. The polypeptide is Erythronate-4-phosphate dehydrogenase (Escherichia coli O139:H28 (strain E24377A / ETEC)).